Consider the following 474-residue polypeptide: Sensor protein CreC (474 aa).

Topologically, residues 1-6 (MRIGMR) are periplasmic. Residues 7-27 (LLLGYFLLVAVAAWFVLAIFV) form a helical membrane-spanning segment. The Cytoplasmic segment spans residues 28–146 (KEVKPGVRRA…LQNPADPESS (119 aa)). A helical transmembrane segment spans residues 147–167 (VMYVAAPIMDGSRLIGVLSVG). The Periplasmic segment spans residues 168–183 (KPNAAMAPVIKRSERR). A helical membrane pass occupies residues 184–204 (ILWASAILLGIALVIGAGMVW). The HAMP domain maps to 205–255 (WINRSIARLTRYADSVTDNKPVPLPDLGSSELRKLAQALESMRVKLEGKNY). At 205–474 (WINRSIARLT…ASLRLHRHFT (270 aa)) the chain is on the cytoplasmic side. The Histidine kinase domain maps to 262–473 (ALTHELKSPL…LASLRLHRHF (212 aa)). Residue H265 is modified to Phosphohistidine; by autocatalysis.

In terms of processing, autophosphorylated.

The protein resides in the cell inner membrane. It carries out the reaction ATP + protein L-histidine = ADP + protein N-phospho-L-histidine.. In terms of biological role, member of the two-component regulatory system CreC/CreB involved in catabolic regulation. CreC may function as a membrane-associated protein kinase that phosphorylates CreB in response to environmental signals. CreC can also phosphorylate PhoB. This is Sensor protein CreC (creC) from Escherichia coli (strain K12).